The following is a 389-amino-acid chain: Putative serine/threonine-protein kinase (389 aa).

The 342-residue stretch at 15 to 356 folds into the Protein kinase domain; it reads YRIEKLINRG…LMVSNYLPWY (342 aa). The Proton acceptor role is filled by aspartate 164.

It belongs to the protein kinase superfamily. Ser/Thr protein kinase family.

It catalyses the reaction L-seryl-[protein] + ATP = O-phospho-L-seryl-[protein] + ADP + H(+). It carries out the reaction L-threonyl-[protein] + ATP = O-phospho-L-threonyl-[protein] + ADP + H(+). The chain is Putative serine/threonine-protein kinase from Mycoplasma pneumoniae (strain ATCC 29342 / M129 / Subtype 1) (Mycoplasmoides pneumoniae).